Here is a 141-residue protein sequence, read N- to C-terminus: Nucleoside diphosphate kinase (141 aa).

6 residues coordinate ATP: K11, F59, R87, T93, R104, and N114. The Pros-phosphohistidine intermediate role is filled by H117.

It belongs to the NDK family. As to quaternary structure, homotetramer. It depends on Mg(2+) as a cofactor.

It is found in the cytoplasm. It carries out the reaction a 2'-deoxyribonucleoside 5'-diphosphate + ATP = a 2'-deoxyribonucleoside 5'-triphosphate + ADP. The enzyme catalyses a ribonucleoside 5'-diphosphate + ATP = a ribonucleoside 5'-triphosphate + ADP. Its function is as follows. Major role in the synthesis of nucleoside triphosphates other than ATP. The ATP gamma phosphate is transferred to the NDP beta phosphate via a ping-pong mechanism, using a phosphorylated active-site intermediate. The chain is Nucleoside diphosphate kinase from Polynucleobacter necessarius subsp. necessarius (strain STIR1).